A 93-amino-acid chain; its full sequence is MARDTAILRVTGFVQGVGFRYTTKHVAYKYDISGTVKNLDDGSVEIHAIAEEENLNKFIDAIKKGPSPGCRIEHVYIYKGAPVEERKTFDIVY.

Residues 5-93 (TAILRVTGFV…EERKTFDIVY (89 aa)) form the Acylphosphatase-like domain. Catalysis depends on residues arginine 20 and asparagine 38.

It belongs to the acylphosphatase family.

It catalyses the reaction an acyl phosphate + H2O = a carboxylate + phosphate + H(+). The protein is Acylphosphatase (acyP) of Listeria monocytogenes serotype 4b (strain F2365).